The chain runs to 141 residues: Holo-[acyl-carrier-protein] synthase (141 aa).

Positions 7 and 57 each coordinate Mg(2+).

The protein belongs to the P-Pant transferase superfamily. AcpS family. It depends on Mg(2+) as a cofactor.

The protein localises to the cytoplasm. The enzyme catalyses apo-[ACP] + CoA = holo-[ACP] + adenosine 3',5'-bisphosphate + H(+). Its function is as follows. Transfers the 4'-phosphopantetheine moiety from coenzyme A to a Ser of acyl-carrier-protein. This chain is Holo-[acyl-carrier-protein] synthase, found in Corynebacterium efficiens (strain DSM 44549 / YS-314 / AJ 12310 / JCM 11189 / NBRC 100395).